The primary structure comprises 299 residues: ATP phosphoribosyltransferase (299 aa).

It belongs to the ATP phosphoribosyltransferase family. Long subfamily. As to quaternary structure, equilibrium between an active dimeric form, an inactive hexameric form and higher aggregates. Interconversion between the various forms is largely reversible and is influenced by the natural substrates and inhibitors of the enzyme. Mg(2+) serves as cofactor.

The protein localises to the cytoplasm. The enzyme catalyses 1-(5-phospho-beta-D-ribosyl)-ATP + diphosphate = 5-phospho-alpha-D-ribose 1-diphosphate + ATP. It functions in the pathway amino-acid biosynthesis; L-histidine biosynthesis; L-histidine from 5-phospho-alpha-D-ribose 1-diphosphate: step 1/9. With respect to regulation, feedback inhibited by histidine. In terms of biological role, catalyzes the condensation of ATP and 5-phosphoribose 1-diphosphate to form N'-(5'-phosphoribosyl)-ATP (PR-ATP). Has a crucial role in the pathway because the rate of histidine biosynthesis seems to be controlled primarily by regulation of HisG enzymatic activity. The sequence is that of ATP phosphoribosyltransferase from Edwardsiella ictaluri (strain 93-146).